A 113-amino-acid polypeptide reads, in one-letter code: Nitrogenase-stabilizing/protective protein NifW (113 aa).

Belongs to the NifW family. Homotrimer; associates with NifD.

In terms of biological role, may protect the nitrogenase Fe-Mo protein from oxidative damage. This Polaromonas naphthalenivorans (strain CJ2) protein is Nitrogenase-stabilizing/protective protein NifW.